The chain runs to 176 residues: Co-chaperone protein HscB (176 aa).

In terms of domain architecture, J spans 2-74; sequence DYFTLFGLPA…LMRAEYLLSL (73 aa).

The protein belongs to the HscB family. Interacts with HscA and stimulates its ATPase activity. Interacts with IscU.

Co-chaperone involved in the maturation of iron-sulfur cluster-containing proteins. Seems to help targeting proteins to be folded toward HscA. The sequence is that of Co-chaperone protein HscB from Escherichia coli O7:K1 (strain IAI39 / ExPEC).